Here is a 316-residue protein sequence, read N- to C-terminus: Ribosomal RNA small subunit methyltransferase H (316 aa).

Residues 35-37, aspartate 55, phenylalanine 84, aspartate 105, and glutamine 112 each bind S-adenosyl-L-methionine; that span reads AGH.

This sequence belongs to the methyltransferase superfamily. RsmH family.

The protein resides in the cytoplasm. The catalysed reaction is cytidine(1402) in 16S rRNA + S-adenosyl-L-methionine = N(4)-methylcytidine(1402) in 16S rRNA + S-adenosyl-L-homocysteine + H(+). In terms of biological role, specifically methylates the N4 position of cytidine in position 1402 (C1402) of 16S rRNA. This is Ribosomal RNA small subunit methyltransferase H from Streptococcus sanguinis (strain SK36).